Consider the following 707-residue polypeptide: Lipase maturation factor 2 (707 aa).

A run of 10 helical transmembrane segments spans residues 10-30, 78-98, 102-122, 126-146, 158-178, 220-240, 256-276, 309-329, 358-378, and 395-415; these read AFLW…YVQI, MELI…FSCL, LVFL…QVFL, WDSL…LHAM, GVTF…SGVV, FSVV…FLPF, ILII…VLCC, LVSL…VKYF, ITFP…LKGM, and LQWL…LVPY. Asn483 is a glycosylation site (N-linked (GlcNAc...) asparagine). The chain crosses the membrane as a helical span at residues 634-654; that stretch reads LLLHSFIFGIFTIYFLQAMFG. Positions 661-707 are disordered; that stretch reads VAKQRHSMPPNEKKKQKPNSGQGESASSKSSGHGTDTVRRNKKNEKS. Low complexity predominate over residues 680 to 694; that stretch reads SGQGESASSKSSGHG. A compositionally biased stretch (basic and acidic residues) spans 696 to 707; that stretch reads DTVRRNKKNEKS.

This sequence belongs to the lipase maturation factor family.

It localises to the endoplasmic reticulum membrane. In terms of biological role, involved in the maturation of specific proteins in the endoplasmic reticulum. The chain is Lipase maturation factor 2 (lmf2) from Xenopus laevis (African clawed frog).